Reading from the N-terminus, the 327-residue chain is 7,8-didemethyl-8-hydroxy-5-deazariboflavin synthase (327 aa).

The Radical SAM core domain maps to 6 to 244 (ITFSRNVFLP…EEVAVQVAPN (239 aa)). The [4Fe-4S] cluster site is built by Cys20, Cys24, and Cys27.

This sequence belongs to the radical SAM superfamily. CofG family. Consists of two subunits, CofG and CofH. [4Fe-4S] cluster serves as cofactor.

It carries out the reaction 5-amino-5-(4-hydroxybenzyl)-6-(D-ribitylimino)-5,6-dihydrouracil + S-adenosyl-L-methionine = 7,8-didemethyl-8-hydroxy-5-deazariboflavin + 5'-deoxyadenosine + L-methionine + NH4(+) + H(+). Its pathway is cofactor biosynthesis; coenzyme F0 biosynthesis. Catalyzes the radical-mediated synthesis of 7,8-didemethyl-8-hydroxy-5-deazariboflavin from 5-amino-5-(4-hydroxybenzyl)-6-(D-ribitylimino)-5,6-dihydrouracil. The protein is 7,8-didemethyl-8-hydroxy-5-deazariboflavin synthase of Methanosphaerula palustris (strain ATCC BAA-1556 / DSM 19958 / E1-9c).